Reading from the N-terminus, the 728-residue chain is Fatty acid oxidation complex subunit alpha (728 aa).

Positions 1-189 are enoyl-CoA hydratase/isomerase; the sequence is MLYQSETIQV…KNGLIDAVVP (189 aa). Residue Asp296 participates in substrate binding. A 3-hydroxyacyl-CoA dehydrogenase region spans residues 311–728; sequence TIPEYAAVLG…TIAVSTGKTA (418 aa). NAD(+)-binding positions include Met324, Asp343, 400-402, Lys407, and Ser429; that span reads VVE. His450 (for 3-hydroxyacyl-CoA dehydrogenase activity) is an active-site residue. Residue Asn453 participates in NAD(+) binding. Residues Asn500 and Tyr660 each coordinate substrate.

This sequence in the N-terminal section; belongs to the enoyl-CoA hydratase/isomerase family. The protein in the C-terminal section; belongs to the 3-hydroxyacyl-CoA dehydrogenase family. Heterotetramer of two alpha chains (FadB) and two beta chains (FadA).

It carries out the reaction a (3S)-3-hydroxyacyl-CoA + NAD(+) = a 3-oxoacyl-CoA + NADH + H(+). It catalyses the reaction a (3S)-3-hydroxyacyl-CoA = a (2E)-enoyl-CoA + H2O. The catalysed reaction is a 4-saturated-(3S)-3-hydroxyacyl-CoA = a (3E)-enoyl-CoA + H2O. The enzyme catalyses (3S)-3-hydroxybutanoyl-CoA = (3R)-3-hydroxybutanoyl-CoA. It carries out the reaction a (3Z)-enoyl-CoA = a 4-saturated (2E)-enoyl-CoA. It catalyses the reaction a (3E)-enoyl-CoA = a 4-saturated (2E)-enoyl-CoA. It functions in the pathway lipid metabolism; fatty acid beta-oxidation. Involved in the aerobic and anaerobic degradation of long-chain fatty acids via beta-oxidation cycle. Catalyzes the formation of 3-oxoacyl-CoA from enoyl-CoA via L-3-hydroxyacyl-CoA. It can also use D-3-hydroxyacyl-CoA and cis-3-enoyl-CoA as substrate. This Photorhabdus laumondii subsp. laumondii (strain DSM 15139 / CIP 105565 / TT01) (Photorhabdus luminescens subsp. laumondii) protein is Fatty acid oxidation complex subunit alpha.